Consider the following 351-residue polypeptide: Soluble interferon alpha/beta receptor OPG204 (351 aa).

A signal peptide spans 1-23 (MKMKMMVRIYFVSLSLLLFHSYA). 2 Ig-like C2-type domains span residues 65–137 (LGEP…KNGD) and 155–237 (PKTY…IVVS). 2 disulfide bridges follow: Cys73–Cys129 and Cys172–Cys221. Asn117, Asn182, Asn261, Asn269, and Asn321 each carry an N-linked (GlcNAc...) asparagine; by host glycan. The region spanning 246–345 (PSQDHRFKLI…HNYYFDKTLT (100 aa)) is the Ig-like V-type domain. Cys272 and Cys333 are disulfide-bonded.

The protein belongs to the interleukin-1 receptor family. In terms of assembly, interacts with host IFNA1.

The protein resides in the secreted. In terms of biological role, counteracts the antiviral effects of host IFN-alpha/beta and key IFN-inducible proteins involved in viral RNA degradation suxh as host OAS1. Acts as a soluble IFN-alpha receptor and thus inhibits the interaction between host IFN-alpha and its receptor. This chain is Soluble interferon alpha/beta receptor OPG204 (OPG204), found in Cynomys gunnisoni (Gunnison's prairie dog).